Consider the following 258-residue polypeptide: Indole-3-glycerol phosphate synthase (258 aa).

Belongs to the TrpC family.

The enzyme catalyses 1-(2-carboxyphenylamino)-1-deoxy-D-ribulose 5-phosphate + H(+) = (1S,2R)-1-C-(indol-3-yl)glycerol 3-phosphate + CO2 + H2O. The protein operates within amino-acid biosynthesis; L-tryptophan biosynthesis; L-tryptophan from chorismate: step 4/5. The polypeptide is Indole-3-glycerol phosphate synthase (Exiguobacterium sibiricum (strain DSM 17290 / CCUG 55495 / CIP 109462 / JCM 13490 / 255-15)).